We begin with the raw amino-acid sequence, 244 residues long: Small ribosomal subunit protein uS3 (244 aa).

Residues 39 to 107 (VREMLRKKLA…PAHINVTEVR (69 aa)) form the KH type-2 domain. The tract at residues 213–244 (VGQEKQDDSPRNDRNDRGDRGDRPSRPAREAR) is disordered. A compositionally biased stretch (basic and acidic residues) spans 216-244 (EKQDDSPRNDRNDRGDRGDRPSRPAREAR).

It belongs to the universal ribosomal protein uS3 family. As to quaternary structure, part of the 30S ribosomal subunit. Forms a tight complex with proteins S10 and S14.

Its function is as follows. Binds the lower part of the 30S subunit head. Binds mRNA in the 70S ribosome, positioning it for translation. In Xanthomonas campestris pv. campestris (strain 8004), this protein is Small ribosomal subunit protein uS3.